The primary structure comprises 387 residues: MANEYLFTSESVSEGHPDKVADQISDAILDAIFQQDPKARVAAETLCNTGLVVLAGEITTFANVDYIEVARQTIKRIGYDNADYGIDYKSCAVLVAYDKQSPDIAQGVDEGAGIDLDQGAGDQGLMFGYACDETPELMPAAIHYAHRIVERQSELRKDGRLPWLRPDAKSQVTLRYVDGRPVSIDTIVLSTQHAPEMQHKDIEEAVIESIIKPVVPAEWLKDTRFLVNPTGRFVIGGPQGDCGLTGRKIIVDTYGGAAPHGGGAFSGKDPSKVDRSAAYAGRYVAKNIVAAGLAERAQIQISYAIGVAKPTSVMVTTFGTGKISDEKIAQLVLEHFDLRPKGIVQMLDLLRPIYQKTAAYGHFGREEPEFSWERTDKAQALRAAAGL.

Residue His-16 coordinates ATP. Asp-18 provides a ligand contact to Mg(2+). Glu-44 serves as a coordination point for K(+). L-methionine contacts are provided by Glu-57 and Gln-100. The flexible loop stretch occupies residues 100-110 (QSPDIAQGVDE). ATP contacts are provided by residues 167 to 169 (DAK), 232 to 233 (RF), Asp-241, 247 to 248 (RK), Ala-264, and Lys-268. Asp-241 contacts L-methionine. Lys-272 lines the L-methionine pocket.

It belongs to the AdoMet synthase family. Homotetramer; dimer of dimers. It depends on Mg(2+) as a cofactor. K(+) is required as a cofactor.

The protein resides in the cytoplasm. The enzyme catalyses L-methionine + ATP + H2O = S-adenosyl-L-methionine + phosphate + diphosphate. It functions in the pathway amino-acid biosynthesis; S-adenosyl-L-methionine biosynthesis; S-adenosyl-L-methionine from L-methionine: step 1/1. Its function is as follows. Catalyzes the formation of S-adenosylmethionine (AdoMet) from methionine and ATP. The overall synthetic reaction is composed of two sequential steps, AdoMet formation and the subsequent tripolyphosphate hydrolysis which occurs prior to release of AdoMet from the enzyme. The protein is S-adenosylmethionine synthase of Janthinobacterium sp. (strain Marseille) (Minibacterium massiliensis).